The primary structure comprises 121 residues: Large ribosomal subunit protein uL14 (121 aa).

This sequence belongs to the universal ribosomal protein uL14 family. Part of the 50S ribosomal subunit. Forms a cluster with proteins L3 and L19. In the 70S ribosome, L14 and L19 interact and together make contacts with the 16S rRNA in bridges B5 and B8.

In terms of biological role, binds to 23S rRNA. Forms part of two intersubunit bridges in the 70S ribosome. This Prochlorococcus marinus (strain MIT 9211) protein is Large ribosomal subunit protein uL14.